The primary structure comprises 502 residues: ATP synthase subunit alpha (502 aa).

169 to 176 (GDRQTGKT) provides a ligand contact to ATP.

The protein belongs to the ATPase alpha/beta chains family. In terms of assembly, F-type ATPases have 2 components, CF(1) - the catalytic core - and CF(0) - the membrane proton channel. CF(1) has five subunits: alpha(3), beta(3), gamma(1), delta(1), epsilon(1). CF(0) has three main subunits: a(1), b(2) and c(9-12). The alpha and beta chains form an alternating ring which encloses part of the gamma chain. CF(1) is attached to CF(0) by a central stalk formed by the gamma and epsilon chains, while a peripheral stalk is formed by the delta and b chains.

The protein localises to the cell membrane. It catalyses the reaction ATP + H2O + 4 H(+)(in) = ADP + phosphate + 5 H(+)(out). Functionally, produces ATP from ADP in the presence of a proton gradient across the membrane. The alpha chain is a regulatory subunit. This chain is ATP synthase subunit alpha, found in Desulfitobacterium hafniense (strain Y51).